We begin with the raw amino-acid sequence, 1293 residues long: Galactose/N-acetyl-D-galactosamine lectin heavy subunit 1 (1293 aa).

Positions 1-15 are cleaved as a signal peptide; it reads MKLLLLNILLLCCLA. Residues 16–1234 are Extracellular-facing; that stretch reads DKLNEFSADI…NNVGAIAAAT (1219 aa). 16 N-linked (GlcNAc...) asparagine glycosylation sites follow: Asn95, Asn198, Asn234, Asn261, Asn337, Asn377, Asn390, Asn468, Asn487, Asn643, Asn659, Asn890, Asn992, Asn1138, Asn1204, and Asn1214. Residues 1235 to 1255 form a helical membrane-spanning segment; it reads TVAVVVVAVVVALIVVSIGLF. At 1256–1293 the chain is on the cytoplasmic side; that stretch reads KTYQLVSSAMKNAITITNENAEYVGADNEATNAATFNG.

Heterodimer composed of a 170 kDa heavy subunit (hgl) and a 31/35 kDa light subunit (lgl); disulfide-linked. Post-translationally, N-glycosylated.

The protein resides in the cell membrane. Functionally, lectin which binds galactose and N-acetyl-D-galactosamine of host glycoproteins and thus mediates adhesion to host cells. Mediates adherence to host colonic mucins, an essential step for pathogenic tissue invasion. The protein is Galactose/N-acetyl-D-galactosamine lectin heavy subunit 1 of Entamoeba histolytica (strain ATCC 30459 / HM-1:IMSS / ABRM).